The primary structure comprises 446 residues: Choline monooxygenase, chloroplastic (446 aa).

A chloroplast-targeting transit peptide spans Met-1–Lys-65. The 108-residue stretch at Trp-127–Ile-234 folds into the Rieske domain. 4 residues coordinate [2Fe-2S] cluster: Cys-169, His-171, Cys-188, and His-191. Fe cation-binding residues include His-294 and His-299.

It belongs to the choline monooxygenase family. [2Fe-2S] cluster is required as a cofactor. It depends on Fe cation as a cofactor. Requires Mg(2+) as cofactor. Expressed in roots and leaves.

The protein localises to the plastid. It is found in the chloroplast stroma. The catalysed reaction is choline + 2 reduced [2Fe-2S]-[ferredoxin] + O2 + 2 H(+) = betaine aldehyde hydrate + 2 oxidized [2Fe-2S]-[ferredoxin] + H2O. Its pathway is amine and polyamine biosynthesis; betaine biosynthesis via choline pathway; betaine aldehyde from choline (monooxygenase route): step 1/1. Its function is as follows. Catalyzes the first step of the osmoprotectant glycine betaine synthesis. The chain is Choline monooxygenase, chloroplastic (CMO) from Beta vulgaris (Sugar beet).